Reading from the N-terminus, the 133-residue chain is Ribulose bisphosphate carboxylase small subunit (133 aa).

This sequence belongs to the RuBisCO small chain family. Heterohexadecamer of 8 large and 8 small subunits.

Functionally, ruBisCO catalyzes two reactions: the carboxylation of D-ribulose 1,5-bisphosphate, the primary event in carbon dioxide fixation, as well as the oxidative fragmentation of the pentose substrate. Both reactions occur simultaneously and in competition at the same active site. Although the small subunit is not catalytic it is essential for maximal activity. In Xanthobacter flavus, this protein is Ribulose bisphosphate carboxylase small subunit.